The sequence spans 126 residues: Small ribosomal subunit protein uS13 (126 aa).

The interval 94 to 126 is disordered; that stretch reads RGLPVHGQRTSTNARTRKGPRRAIAGKKKPGKK. Residues 108-126 show a composition bias toward basic residues; sequence RTRKGPRRAIAGKKKPGKK.

It belongs to the universal ribosomal protein uS13 family. As to quaternary structure, part of the 30S ribosomal subunit. Forms a loose heterodimer with protein S19. Forms two bridges to the 50S subunit in the 70S ribosome.

Its function is as follows. Located at the top of the head of the 30S subunit, it contacts several helices of the 16S rRNA. In the 70S ribosome it contacts the 23S rRNA (bridge B1a) and protein L5 of the 50S subunit (bridge B1b), connecting the 2 subunits; these bridges are implicated in subunit movement. Contacts the tRNAs in the A and P-sites. The chain is Small ribosomal subunit protein uS13 from Streptomyces griseus subsp. griseus (strain JCM 4626 / CBS 651.72 / NBRC 13350 / KCC S-0626 / ISP 5235).